We begin with the raw amino-acid sequence, 902 residues long: Glutamate receptor 4 (902 aa).

The first 20 residues, 1–20, serve as a signal peptide directing secretion; it reads MRIISRQIVLLFSGFWGLAM. The Extracellular portion of the chain corresponds to 22-544; it reads AFPSSVQIGG…GVFSFLDPLA (523 aa). N52, N56, N258, N371, N407, and N414 each carry an N-linked (GlcNAc...) asparagine glycan. An intrachain disulfide couples C84 to C331. L-glutamate-binding residues include P500, T502, and R507. The chain crosses the membrane as a helical span at residues 545–565; the sequence is YEIWMCIVFAYIGVSVVLFLV. The Cytoplasmic portion of the chain corresponds to 566 to 592; it reads SRFSPYEWHTEEPEDGKEGPSDQPPNE. The helical; Pore-forming intramembrane region spans 593-608; it reads FGIFNSLWFSLGAFMQ. Residues 609–611 lie within the membrane without spanning it; the sequence is QGC. The S-palmitoyl cysteine moiety is linked to residue C611. Residues 612 to 617 lie on the Cytoplasmic side of the membrane; the sequence is DISPRS. Residues 618–638 traverse the membrane as a helical segment; sequence LSGRIVGGVWWFFTLIIISSY. The Extracellular portion of the chain corresponds to 639–813; it reads TANLAAFLTV…DKTSALSLSN (175 aa). S676, T677, and E727 together coordinate L-glutamate. The cysteines at positions 740 and 795 are disulfide-linked. Residues 814 to 834 traverse the membrane as a helical segment; the sequence is VAGVFYILVGGLGLAMLVALI. The Cytoplasmic segment spans residues 835-902; the sequence is EFCYKSRAEA…GLAVIASDLP (68 aa). The S-palmitoyl cysteine moiety is linked to residue C837. The residue at position 862 (S862) is a Phosphoserine; by PKC/PRKCG.

Belongs to the glutamate-gated ion channel (TC 1.A.10.1) family. GRIA4 subfamily. Homotetramer or heterotetramer of pore-forming glutamate receptor subunits. Tetramers may be formed by the dimerization of dimers. Interacts with EPB41L1 via its C-terminus. Isoform 3 interacts with PICK1. Found in a complex with GRIA1, GRIA2, GRIA3, CNIH2, CNIH3, CACNG2, CACNG3, CACNG4, CACNG5, CACNG7 and CACNG8. Interacts with CACNG5 and PRKCG. Found in a complex with GRIA1, GRIA2, GRIA3, DLG4, CACNG8 and CNIH2. Post-translationally, palmitoylated. Depalmitoylated upon L-glutamate stimulation. ZDHHC3/GODZ specifically palmitoylates Cys-611, which leads to Golgi retention and decreased cell surface expression. In contrast, Cys-837 palmitoylation does not affect cell surface expression but regulates stimulation-dependent endocytosis. Phosphorylated at Ser-862 by PRKCG; phosphorylation increases plasma membrane-associated GRI4 expression.

The protein resides in the cell membrane. It is found in the postsynaptic cell membrane. It localises to the cell projection. Its subcellular location is the dendrite. The catalysed reaction is Ca(2+)(in) = Ca(2+)(out). It catalyses the reaction Na(+)(in) = Na(+)(out). It carries out the reaction Mg(2+)(in) = Mg(2+)(out). Functionally, ionotropic glutamate receptor that functions as a ligand-gated cation channel, gated by L-glutamate and glutamatergic agonists such as alpha-amino-3-hydroxy-5-methyl-4-isoxazolepropionic acid (AMPA), quisqualic acid, and kainic acid. L-glutamate acts as an excitatory neurotransmitter at many synapses in the central nervous system and plays an important role in fast excitatory synaptic transmission. Binding of the excitatory neurotransmitter L-glutamate induces a conformation change, leading to the opening of the cation channel, and thereby converts the chemical signal to an electrical impulse upon entry of monovalent and divalent cations such as sodium and calcium. The receptor then desensitizes rapidly and enters a transient inactive state, characterized by the presence of bound agonist. In the presence of CACNG8, shows resensitization which is characterized by a delayed accumulation of current flux upon continued application of L-glutamate. The chain is Glutamate receptor 4 from Macaca fascicularis (Crab-eating macaque).